The primary structure comprises 134 residues: MIIGIGSDLIDIRRVEKSIERFGDRFTHRCFTEIERARSDRRANRGASYAKRFAAKEACSKALGTGIAQGVFWKDMGVVNLPSGKPTMVLSGAAALILESMLPAGHRPAIHLTITDDYPLAQAFVIIEALPESL.

The Mg(2+) site is built by aspartate 8 and glutamate 57.

This sequence belongs to the P-Pant transferase superfamily. AcpS family. It depends on Mg(2+) as a cofactor.

The protein resides in the cytoplasm. The enzyme catalyses apo-[ACP] + CoA = holo-[ACP] + adenosine 3',5'-bisphosphate + H(+). Functionally, transfers the 4'-phosphopantetheine moiety from coenzyme A to a Ser of acyl-carrier-protein. The sequence is that of Holo-[acyl-carrier-protein] synthase from Rhizobium leguminosarum bv. trifolii (strain WSM2304).